The chain runs to 134 residues: Phosphoribosyl-ATP pyrophosphatase (134 aa).

It belongs to the PRA-PH family.

The protein localises to the cytoplasm. The catalysed reaction is 1-(5-phospho-beta-D-ribosyl)-ATP + H2O = 1-(5-phospho-beta-D-ribosyl)-5'-AMP + diphosphate + H(+). It functions in the pathway amino-acid biosynthesis; L-histidine biosynthesis; L-histidine from 5-phospho-alpha-D-ribose 1-diphosphate: step 2/9. The protein is Phosphoribosyl-ATP pyrophosphatase of Verminephrobacter eiseniae (strain EF01-2).